The primary structure comprises 62 residues: Sperm protamine P1 (62 aa).

Residues 1 to 62 are disordered; that stretch reads MARYRHSRSR…RYSRRRRRRY (62 aa).

Belongs to the protamine P1 family. In terms of tissue distribution, testis.

The protein localises to the nucleus. Its subcellular location is the chromosome. Its function is as follows. Protamines substitute for histones in the chromatin of sperm during the haploid phase of spermatogenesis. They compact sperm DNA into a highly condensed, stable and inactive complex. This Thylogale stigmatica (Red-legged pademelon) protein is Sperm protamine P1 (PRM1).